The sequence spans 180 residues: Anaerobic nitrite reductase GLB0 (180 aa).

The Globin domain maps to 23–172 (TYSKENEQLV…LAEQVKAEMH (150 aa)). The Homodimerization signature appears at 56–60 (EIAPG). Positions 66, 80, 84, 114, 118, and 119 each coordinate heme b. A Homodimerization motif is present at residues 126 to 138 (DDQFEIVKEAILY).

This sequence belongs to the plant globin family. Homodimer. Heme b serves as cofactor.

The protein resides in the cytoplasm. Its subcellular location is the nucleus. It catalyses the reaction Fe(III)-heme b-[protein] + nitric oxide + H2O = Fe(II)-heme b-[protein] + nitrite + 2 H(+). Functionally, phytoglobin that reduces nitrite to nitric oxide (NO) under anoxic conditions (e.g. during flooding or in waterlogged soil). May not function as an oxygen storage or transport protein. Has an unusually high affinity for O(2) through an hexacoordinate heme iron because of a very low dissociation constant. In Physcomitrium patens (Spreading-leaved earth moss), this protein is Anaerobic nitrite reductase GLB0.